A 208-amino-acid chain; its full sequence is Small ribosomal subunit protein uS4 (208 aa).

The S4 RNA-binding domain maps to 95-159; it reads TIIDNIVYRA…LKKLIGSNIE (65 aa).

This sequence belongs to the universal ribosomal protein uS4 family. In terms of assembly, part of the 30S ribosomal subunit. Contacts protein S5. The interaction surface between S4 and S5 is involved in control of translational fidelity.

Functionally, one of the primary rRNA binding proteins, it binds directly to 16S rRNA where it nucleates assembly of the body of the 30S subunit. Its function is as follows. With S5 and S12 plays an important role in translational accuracy. This Borreliella afzelii (strain PKo) (Borrelia afzelii) protein is Small ribosomal subunit protein uS4.